The primary structure comprises 496 residues: Aspartyl/glutamyl-tRNA(Asn/Gln) amidotransferase subunit B (496 aa).

It belongs to the GatB/GatE family. GatB subfamily. In terms of assembly, heterotrimer of A, B and C subunits.

The enzyme catalyses L-glutamyl-tRNA(Gln) + L-glutamine + ATP + H2O = L-glutaminyl-tRNA(Gln) + L-glutamate + ADP + phosphate + H(+). The catalysed reaction is L-aspartyl-tRNA(Asn) + L-glutamine + ATP + H2O = L-asparaginyl-tRNA(Asn) + L-glutamate + ADP + phosphate + 2 H(+). Allows the formation of correctly charged Asn-tRNA(Asn) or Gln-tRNA(Gln) through the transamidation of misacylated Asp-tRNA(Asn) or Glu-tRNA(Gln) in organisms which lack either or both of asparaginyl-tRNA or glutaminyl-tRNA synthetases. The reaction takes place in the presence of glutamine and ATP through an activated phospho-Asp-tRNA(Asn) or phospho-Glu-tRNA(Gln). In Prochlorococcus marinus (strain MIT 9303), this protein is Aspartyl/glutamyl-tRNA(Asn/Gln) amidotransferase subunit B.